We begin with the raw amino-acid sequence, 197 residues long: RNA pyrophosphohydrolase (197 aa).

One can recognise a Nudix hydrolase domain in the interval 6-154; sequence GYRPNVGIVL…KREVYQLALS (149 aa). A Nudix box motif is present at residues 38-59; it reads GGIQHGESPEQAMYRELHEEVG.

Belongs to the Nudix hydrolase family. RppH subfamily. A divalent metal cation is required as a cofactor.

Accelerates the degradation of transcripts by removing pyrophosphate from the 5'-end of triphosphorylated RNA, leading to a more labile monophosphorylated state that can stimulate subsequent ribonuclease cleavage. The sequence is that of RNA pyrophosphohydrolase from Polynucleobacter necessarius subsp. necessarius (strain STIR1).